Consider the following 50-residue polypeptide: Insulin (50 aa).

Disulfide bonds link Cys7–Cys36, Cys19–Cys49, and Cys35–Cys40.

It belongs to the insulin family. Heterodimer of a B chain and an A chain linked by two disulfide bonds.

The protein localises to the secreted. Its function is as follows. Insulin decreases blood glucose concentration. It increases cell permeability to monosaccharides, amino acids and fatty acids. It accelerates glycolysis, the pentose phosphate cycle, and glycogen synthesis in liver. This is Insulin (ins) from Myoxocephalus scorpius (Shorthorn sculpin).